The primary structure comprises 264 residues: Low molecular mass lipoprotein PBMHP-12 (264 aa).

Residues 1-16 (MKLLVVFAMCVPAASA) form the signal peptide.

This sequence belongs to the 30 kDa lipoprotein family.

Its subcellular location is the secreted. In Bombyx mori (Silk moth), this protein is Low molecular mass lipoprotein PBMHP-12.